Consider the following 4114-residue polypeptide: Ferrichrome siderophore peptide synthetase (4114 aa).

Carrier domains follow at residues 797–874 (DPAT…QSSG), 1947–2021 (TDSE…IDKL), 3020–3093 (TQSE…MQSS), and 3574–3650 (QALS…SQTN). O-(pantetheine 4'-phosphoryl)serine occurs at positions 835, 1982, 3054, and 3611. Residues 4040 to 4061 (LDYSHHSQHSTHDRTPPSTPHV) are disordered. A compositionally biased stretch (basic and acidic residues) spans 4041–4054 (DYSHHSQHSTHDRT).

It belongs to the ATP-dependent AMP-binding enzyme family. The cofactor is pantetheine 4'-phosphate.

Its pathway is siderophore biosynthesis; ferrichrome biosynthesis. Multidomain peptide synthetase involved in ferrichrome biosynthesis. The polypeptide is Ferrichrome siderophore peptide synthetase (SID2) (Mycosarcoma maydis (Corn smut fungus)).